The sequence spans 221 residues: Chalcone--flavanone isomerase (221 aa).

Substrate-binding residues include Thr-52, Asn-117, and Ser-193.

It belongs to the chalcone isomerase family. Flowers.

The catalysed reaction is a chalcone = a flavanone.. It functions in the pathway secondary metabolite biosynthesis; flavonoid biosynthesis. Its function is as follows. Catalyzes the intramolecular cyclization of bicyclic chalcones into tricyclic (S)-flavanones. Responsible for the isomerization of 4,2',4',6'-tetrahydroxychalcone (also termed chalcone) into naringenin. This is Chalcone--flavanone isomerase (CHI) from Gentiana triflora (Clustered gentian).